We begin with the raw amino-acid sequence, 198 residues long: Recombination protein RecR (198 aa).

A C4-type zinc finger spans residues C57–C72. The region spanning S80–S175 is the Toprim domain.

This sequence belongs to the RecR family.

Its function is as follows. May play a role in DNA repair. It seems to be involved in an RecBC-independent recombinational process of DNA repair. It may act with RecF and RecO. This is Recombination protein RecR from Staphylococcus saprophyticus subsp. saprophyticus (strain ATCC 15305 / DSM 20229 / NCIMB 8711 / NCTC 7292 / S-41).